A 77-amino-acid chain; its full sequence is Small ribosomal subunit protein bS16c (77 aa).

Belongs to the bacterial ribosomal protein bS16 family.

It is found in the plastid. The protein localises to the chloroplast. This chain is Small ribosomal subunit protein bS16c, found in Eucalyptus globulus subsp. globulus (Tasmanian blue gum).